A 215-amino-acid chain; its full sequence is ATP-dependent Clp protease proteolytic subunit 3 (215 aa).

Ser119 functions as the Nucleophile in the catalytic mechanism. His144 is a catalytic residue.

Belongs to the peptidase S14 family. As to quaternary structure, fourteen ClpP subunits assemble into 2 heptameric rings which stack back to back to give a disk-like structure with a central cavity, resembling the structure of eukaryotic proteasomes.

The protein localises to the cytoplasm. It catalyses the reaction Hydrolysis of proteins to small peptides in the presence of ATP and magnesium. alpha-casein is the usual test substrate. In the absence of ATP, only oligopeptides shorter than five residues are hydrolyzed (such as succinyl-Leu-Tyr-|-NHMec, and Leu-Tyr-Leu-|-Tyr-Trp, in which cleavage of the -Tyr-|-Leu- and -Tyr-|-Trp bonds also occurs).. Its function is as follows. Cleaves peptides in various proteins in a process that requires ATP hydrolysis. Has a chymotrypsin-like activity. Plays a major role in the degradation of misfolded proteins. This Prochlorococcus marinus subsp. pastoris (strain CCMP1986 / NIES-2087 / MED4) protein is ATP-dependent Clp protease proteolytic subunit 3.